Here is an 829-residue protein sequence, read N- to C-terminus: FAST kinase domain-containing protein 1, mitochondrial (829 aa).

Residue K346 is modified to N6-acetyllysine. In terms of domain architecture, RAP spans 761–821; sequence IAIELLDVRA…KDARMDYLRE (61 aa).

The protein belongs to the FAST kinase family. In terms of tissue distribution, expression detected in spleen, testis, colon, heart, smooth muscle, kidney, brain, lung, liver, brown and white adipose tissue with highest expression in heart and brown adipose tissue.

Its subcellular location is the mitochondrion. Functionally, involved in the down-regulation of mitochondrial MT-ND3 mRNA levels which leads to decreased respiratory complex I abundance and activity. This chain is FAST kinase domain-containing protein 1, mitochondrial (Fastkd1), found in Mus musculus (Mouse).